We begin with the raw amino-acid sequence, 261 residues long: 4-hydroxy-tetrahydrodipicolinate reductase (261 aa).

NAD(+) is bound by residues 11-16 (GFTGAM), 96-98 (GTT), and 122-125 (APNF). The active-site Proton donor/acceptor is the histidine 152. Position 153 (histidine 153) interacts with (S)-2,3,4,5-tetrahydrodipicolinate. Lysine 156 serves as the catalytic Proton donor. Position 162-163 (162-163 (GT)) interacts with (S)-2,3,4,5-tetrahydrodipicolinate.

This sequence belongs to the DapB family.

It is found in the cytoplasm. The catalysed reaction is (S)-2,3,4,5-tetrahydrodipicolinate + NAD(+) + H2O = (2S,4S)-4-hydroxy-2,3,4,5-tetrahydrodipicolinate + NADH + H(+). It catalyses the reaction (S)-2,3,4,5-tetrahydrodipicolinate + NADP(+) + H2O = (2S,4S)-4-hydroxy-2,3,4,5-tetrahydrodipicolinate + NADPH + H(+). The protein operates within amino-acid biosynthesis; L-lysine biosynthesis via DAP pathway; (S)-tetrahydrodipicolinate from L-aspartate: step 4/4. Functionally, catalyzes the conversion of 4-hydroxy-tetrahydrodipicolinate (HTPA) to tetrahydrodipicolinate. This chain is 4-hydroxy-tetrahydrodipicolinate reductase, found in Lactobacillus acidophilus (strain ATCC 700396 / NCK56 / N2 / NCFM).